We begin with the raw amino-acid sequence, 478 residues long: Glycogen synthase (478 aa).

ADP-alpha-D-glucose is bound at residue Lys15.

It belongs to the glycosyltransferase 1 family. Bacterial/plant glycogen synthase subfamily.

The enzyme catalyses [(1-&gt;4)-alpha-D-glucosyl](n) + ADP-alpha-D-glucose = [(1-&gt;4)-alpha-D-glucosyl](n+1) + ADP + H(+). Its pathway is glycan biosynthesis; glycogen biosynthesis. In terms of biological role, synthesizes alpha-1,4-glucan chains using ADP-glucose. The chain is Glycogen synthase from Lactococcus lactis subsp. lactis (strain IL1403) (Streptococcus lactis).